The following is an 810-amino-acid chain: Volume-regulated anion channel subunit LRRC8A (810 aa).

At Met-1 the chain carries N-acetylmethionine. Over 1–22 (MIPVTELRYFADTQPAYRILKP) the chain is Cytoplasmic. Residues 23–47 (WWDVFTDYISIVMLMIAVFGGTLQV) traverse the membrane as a helical segment. Residues 48-123 (TQDKMICLPC…YENRLHWFAK (76 aa)) are Extracellular-facing. Disulfide bonds link Cys-54–Cys-310, Cys-57–Cys-65, and Cys-113–Cys-295. Asn-66 and Asn-83 each carry an N-linked (GlcNAc...) asparagine glycan. The chain crosses the membrane as a helical span at residues 124 to 142 (YFPYLVLLHTLIFLACSNF). Residues 143-264 (WFKFPRTSSK…EEGDIVYRLY (122 aa)) are Cytoplasmic-facing. At Thr-200 the chain carries Phosphothreonine. Ser-202 carries the phosphoserine modification. Thr-215 is modified (phosphothreonine). Position 217 is a phosphoserine (Ser-217). The chain crosses the membrane as a helical span at residues 265 to 286 (MRQTIIKVIKFFLIICYTVYYV). Over 287–316 (HNIKFDVDCTVDIESLTGYRTYRCAHPLAT) the chain is Extracellular. The chain crosses the membrane as a helical span at residues 317-341 (LFKILASFYISLVIFYGLICMYTLW). The Cytoplasmic segment spans residues 342–810 (WMLRRSLKKY…RLWRADKEQA (469 aa)). LRR repeat units lie at residues 399–422 (ENKL…RLTK), 423–445 (NAQD…VFDL), 447–468 (ELEV…IAQL), 469–492 (TGLK…AFLR), 493–515 (ENLR…IYSL), 518–542 (LEEL…GLRE), 543–565 (LKRL…VTDV), 567–589 (VHLQ…SLKK), 590–613 (MVNL…IFSL), 614–637 (HNLQ…SFQH), 639–661 (HRLT…IGNL), 662–684 (TNLE…LFYC), 686–707 (KLRY…IGLL), 708–730 (QNLQ…LFQC), 732–753 (KLRA…VGEL), 754–776 (TNLT…LGEC), and 778–801 (LLKR…VKER). The Di-leucine motif signature appears at 706–707 (LL).

The protein belongs to the LRRC8 family. In terms of assembly, heterohexamer; oligomerizes with other LRRC8 proteins (LRRC8B, LRRC8C, LRRC8D and/or LRRC8E) to form a heterohexamer. Can form homohexamers in vitro, but these have lower conductance than heterohexamers. Detected in a channel complex that contains LRRC8A, LRRC8C and LRRC8E. In vivo, the subunit composition may depend primarily on expression levels, and heterooligomeric channels containing various proportions of the different LRRC8 proteins may coexist. Interact with GRB2. Interacts with NOX4; this interaction prevents the ubiquitin-mediated degradation of LRRC8A. N-glycosylated.

The protein resides in the cell membrane. It localises to the lysosome membrane. It carries out the reaction chloride(in) = chloride(out). The catalysed reaction is iodide(out) = iodide(in). The enzyme catalyses taurine(out) = taurine(in). It catalyses the reaction L-aspartate(out) = L-aspartate(in). It carries out the reaction L-glutamate(out) = L-glutamate(in). The catalysed reaction is myo-inositol(out) = myo-inositol(in). The enzyme catalyses 2',3'-cGAMP(out) = 2',3'-cGAMP(in). With respect to regulation, inhibited by (4-[(2-butyl-6,7-dichloro-2-cyclopentyl-2,3-dihydro-1-oxo-1H-inden-5-yl)oxy]butanoic acid), which plugs the channel like a cork in a bottle by binding in the extracellular selectivity filter and sterically occluding ion conduction. Lipids may block conduction in closed heterohexameric channels. Its function is as follows. Essential component of the volume-regulated anion channel (VRAC, also named VSOAC channel), an anion channel required to maintain a constant cell volume in response to extracellular or intracellular osmotic changes. The VRAC channel conducts iodide better than chloride and can also conduct organic osmolytes like taurine. Mediates efflux of amino acids, such as aspartate and glutamate, in response to osmotic stress. In complex with LRRC8C or LRRC8E, acts as a transporter of immunoreactive cyclic dinucleotide GMP-AMP (2'-3'-cGAMP), an immune messenger produced in response to DNA virus in the cytosol: mediates both import and export of 2'-3'-cGAMP, thereby promoting transfer of 2'-3'-cGAMP to bystander cells. In contrast, complexes containing LRRC8D inhibit transport of 2'-3'-cGAMP. Required for in vivo channel activity, together with at least one other family member (LRRC8B, LRRC8C, LRRC8D or LRRC8E); channel characteristics depend on the precise subunit composition. Can form functional channels by itself (in vitro). Involved in B-cell development: required for the pro-B cell to pre-B cell transition. Also required for T-cell development. Required for myoblast differentiation: VRAC activity promotes membrane hyperpolarization and regulates insulin-stimulated glucose metabolism and oxygen consumption. Also acts as a regulator of glucose-sensing in pancreatic beta cells: VRAC currents, generated in response to hypotonicity- or glucose-induced beta cell swelling, depolarize cells, thereby causing electrical excitation, leading to increase glucose sensitivity and insulin secretion. Also plays a role in lysosome homeostasis by forming functional lysosomal VRAC channels in response to low cytoplasmic ionic strength condition: lysosomal VRAC channels are necessary for the formation of large lysosome-derived vacuoles, which store and then expel excess water to maintain cytosolic water homeostasis. Acts as a key factor in NLRP3 inflammasome activation by modulating itaconate efflux and mitochondria function. The sequence is that of Volume-regulated anion channel subunit LRRC8A from Rattus norvegicus (Rat).